The sequence spans 78 residues: UPF0349 protein RBAM_029300 (78 aa).

Belongs to the UPF0349 family.

The chain is UPF0349 protein RBAM_029300 from Bacillus velezensis (strain DSM 23117 / BGSC 10A6 / LMG 26770 / FZB42) (Bacillus amyloliquefaciens subsp. plantarum).